The primary structure comprises 361 residues: Ribosomal RNA large subunit methyltransferase M (361 aa).

S-adenosyl-L-methionine contacts are provided by residues serine 187, cysteine 220–glycine 223, aspartate 239, aspartate 259, and aspartate 276. Lysine 305 functions as the Proton acceptor in the catalytic mechanism.

Belongs to the class I-like SAM-binding methyltransferase superfamily. RNA methyltransferase RlmE family. RlmM subfamily. In terms of assembly, monomer.

The protein resides in the cytoplasm. The enzyme catalyses cytidine(2498) in 23S rRNA + S-adenosyl-L-methionine = 2'-O-methylcytidine(2498) in 23S rRNA + S-adenosyl-L-homocysteine + H(+). Its function is as follows. Catalyzes the 2'-O-methylation at nucleotide C2498 in 23S rRNA. The protein is Ribosomal RNA large subunit methyltransferase M of Shewanella putrefaciens (strain CN-32 / ATCC BAA-453).